The chain runs to 272 residues: Sulfate transporter CysZ (272 aa).

The next 4 helical transmembrane spans lie at 29-49 (FVIMPIVLNTVLLCGLFWLFI), 66-86 (WLSFLSVILLILSILTILLLF), 148-168 (IIALFLLSFIPLVGQTIVPVL), and 219-239 (FVPVINLLIMPVAVCGATLMW).

Belongs to the CysZ family.

Its subcellular location is the cell inner membrane. Its function is as follows. High affinity, high specificity proton-dependent sulfate transporter, which mediates sulfate uptake. Provides the sulfur source for the cysteine synthesis pathway. The sequence is that of Sulfate transporter CysZ from Haemophilus influenzae (strain ATCC 51907 / DSM 11121 / KW20 / Rd).